The primary structure comprises 474 residues: 3-isopropylmalate dehydratase large subunit (474 aa).

The [4Fe-4S] cluster site is built by C353, C414, and C417.

It belongs to the aconitase/IPM isomerase family. LeuC type 1 subfamily. In terms of assembly, heterodimer of LeuC and LeuD. Requires [4Fe-4S] cluster as cofactor.

The enzyme catalyses (2R,3S)-3-isopropylmalate = (2S)-2-isopropylmalate. It functions in the pathway amino-acid biosynthesis; L-leucine biosynthesis; L-leucine from 3-methyl-2-oxobutanoate: step 2/4. Functionally, catalyzes the isomerization between 2-isopropylmalate and 3-isopropylmalate, via the formation of 2-isopropylmaleate. The polypeptide is 3-isopropylmalate dehydratase large subunit (Xylella fastidiosa (strain M23)).